Consider the following 291-residue polypeptide: ATP synthase gamma chain (291 aa).

Belongs to the ATPase gamma chain family. As to quaternary structure, F-type ATPases have 2 components, CF(1) - the catalytic core - and CF(0) - the membrane proton channel. CF(1) has five subunits: alpha(3), beta(3), gamma(1), delta(1), epsilon(1). CF(0) has three main subunits: a, b and c.

Its subcellular location is the cell inner membrane. Functionally, produces ATP from ADP in the presence of a proton gradient across the membrane. The gamma chain is believed to be important in regulating ATPase activity and the flow of protons through the CF(0) complex. This is ATP synthase gamma chain from Burkholderia mallei (strain NCTC 10247).